A 152-amino-acid polypeptide reads, in one-letter code: Adrenodoxin-like protein 2, mitochondrial (152 aa).

Residues 1 to 29 (MLVINSCRAASRLALRSLNLRSPIATRTF) constitute a mitochondrion transit peptide. One can recognise a 2Fe-2S ferredoxin-type domain in the interval 41–146 (VNITFVRANG…GLEVHVPSTI (106 aa)). Residues C80, C86, C89, and C127 each contribute to the [2Fe-2S] cluster site.

It belongs to the adrenodoxin/putidaredoxin family. Requires [2Fe-2S] cluster as cofactor.

The protein resides in the mitochondrion. In terms of biological role, required for ecdysteroidogenesis in the prothoracic gland which is necessary for larval to pupal transition. This is Adrenodoxin-like protein 2, mitochondrial from Drosophila melanogaster (Fruit fly).